Here is a 418-residue protein sequence, read N- to C-terminus: BTB and MATH domain-containing protein 41 (418 aa).

The segment at 1-33 is disordered; that stretch reads MEINNGAQPENAAVSIPSRSPSGKSEKRKSPSI. One can recognise an MATH domain in the interval 45 to 173; it reads SFTNYWSVER…NDILTIGCEL (129 aa). Residues 232-293 form the BTB domain; it reads SDFIIVASCG…TLDVLLRHMY (62 aa).

Interacts with cul-3.

Its pathway is protein modification; protein ubiquitination. Probable substrate-specific adapter of an E3 ubiquitin-protein ligase complex which mediates the ubiquitination and subsequent proteasomal degradation of target proteins. This Caenorhabditis elegans protein is BTB and MATH domain-containing protein 41 (bath-41).